The sequence spans 266 residues: Protein crossbronx-like (266 aa).

A UBC core domain is found at 15–178 (KQGYHILAEY…VQEQAIASRN (164 aa)).

It belongs to the ubiquitin-conjugating enzyme family. FTS subfamily.

The protein is Protein crossbronx-like of Drosophila erecta (Fruit fly).